A 504-amino-acid chain; its full sequence is Deoxyguanosinetriphosphate triphosphohydrolase (504 aa).

Positions 66-273 (RLTHSMEVQQ…MEAADDISYC (208 aa)) constitute an HD domain.

This sequence belongs to the dGTPase family. Type 1 subfamily. In terms of assembly, homotetramer. Mg(2+) is required as a cofactor.

The enzyme catalyses dGTP + H2O = 2'-deoxyguanosine + triphosphate + H(+). In terms of biological role, dGTPase preferentially hydrolyzes dGTP over the other canonical NTPs. This is Deoxyguanosinetriphosphate triphosphohydrolase from Enterobacter sp. (strain 638).